A 243-amino-acid chain; its full sequence is 1-(5-phosphoribosyl)-5-[(5-phosphoribosylamino)methylideneamino] imidazole-4-carboxamide isomerase (243 aa).

Catalysis depends on Asp-8, which acts as the Proton acceptor. Asp-129 (proton donor) is an active-site residue.

It belongs to the HisA/HisF family.

The protein localises to the cytoplasm. The catalysed reaction is 1-(5-phospho-beta-D-ribosyl)-5-[(5-phospho-beta-D-ribosylamino)methylideneamino]imidazole-4-carboxamide = 5-[(5-phospho-1-deoxy-D-ribulos-1-ylimino)methylamino]-1-(5-phospho-beta-D-ribosyl)imidazole-4-carboxamide. Its pathway is amino-acid biosynthesis; L-histidine biosynthesis; L-histidine from 5-phospho-alpha-D-ribose 1-diphosphate: step 4/9. The protein is 1-(5-phosphoribosyl)-5-[(5-phosphoribosylamino)methylideneamino] imidazole-4-carboxamide isomerase of Azorhizobium caulinodans (strain ATCC 43989 / DSM 5975 / JCM 20966 / LMG 6465 / NBRC 14845 / NCIMB 13405 / ORS 571).